The chain runs to 298 residues: Beta-soluble NSF attachment protein (298 aa).

Belongs to the SNAP family. As to quaternary structure, interacts with PRKCABP, and disrupts the interaction between GRIA2 and PRKCABP, leading to the internalization of GRIA2. As to expression, brain.

The protein resides in the membrane. Required for vesicular transport between the endoplasmic reticulum and the Golgi apparatus. The sequence is that of Beta-soluble NSF attachment protein (NAPB) from Bos taurus (Bovine).